Reading from the N-terminus, the 586-residue chain is Adenine deaminase (586 aa).

Belongs to the metallo-dependent hydrolases superfamily. Adenine deaminase family. Mn(2+) serves as cofactor.

It carries out the reaction adenine + H2O + H(+) = hypoxanthine + NH4(+). The chain is Adenine deaminase from Bdellovibrio bacteriovorus (strain ATCC 15356 / DSM 50701 / NCIMB 9529 / HD100).